The following is a 142-amino-acid chain: Large ribosomal subunit protein uL11 (142 aa).

The protein belongs to the universal ribosomal protein uL11 family. In terms of assembly, part of the ribosomal stalk of the 50S ribosomal subunit. Interacts with L10 and the large rRNA to form the base of the stalk. L10 forms an elongated spine to which L12 dimers bind in a sequential fashion forming a multimeric L10(L12)X complex. One or more lysine residues are methylated.

Functionally, forms part of the ribosomal stalk which helps the ribosome interact with GTP-bound translation factors. The chain is Large ribosomal subunit protein uL11 from Afipia carboxidovorans (strain ATCC 49405 / DSM 1227 / KCTC 32145 / OM5) (Oligotropha carboxidovorans).